Reading from the N-terminus, the 157-residue chain is MDVVMKLNNIFSGLPKKKKSKVLGRGIGCGKGKTSGRGHKGQKARSGVSINGFEGGQQSIFTRLPKRGFNSLPKNKYSIINVSLIQRLIDSGKIDNVSAITKEVLYNLGVISSVKQKIKILGDGKLNTTVCIEYDFISKSAKSQVTLLNSLSDSESK.

It belongs to the universal ribosomal protein uL15 family. Part of the 50S ribosomal subunit.

In terms of biological role, binds to the 23S rRNA. This chain is Large ribosomal subunit protein uL15, found in Ehrlichia ruminantium (strain Gardel).